Consider the following 143-residue polypeptide: Large ribosomal subunit protein uL11 (143 aa).

The protein belongs to the universal ribosomal protein uL11 family. Part of the ribosomal stalk of the 50S ribosomal subunit. Interacts with L10 and the large rRNA to form the base of the stalk. L10 forms an elongated spine to which L12 dimers bind in a sequential fashion forming a multimeric L10(L12)X complex. One or more lysine residues are methylated.

In terms of biological role, forms part of the ribosomal stalk which helps the ribosome interact with GTP-bound translation factors. This Bifidobacterium longum subsp. infantis (strain ATCC 15697 / DSM 20088 / JCM 1222 / NCTC 11817 / S12) protein is Large ribosomal subunit protein uL11.